Here is a 407-residue protein sequence, read N- to C-terminus: Imidazolonepropionase (407 aa).

Residues His-68 and His-70 each contribute to the Fe(3+) site. His-68 and His-70 together coordinate Zn(2+). 4-imidazolone-5-propanoate-binding residues include Arg-77, Tyr-140, and His-173. An N-formimidoyl-L-glutamate-binding site is contributed by Tyr-140. His-238 lines the Fe(3+) pocket. Zn(2+) is bound at residue His-238. Gln-241 provides a ligand contact to 4-imidazolone-5-propanoate. Asp-313 contributes to the Fe(3+) binding site. Position 313 (Asp-313) interacts with Zn(2+). N-formimidoyl-L-glutamate is bound by residues Asn-315 and Gly-317. Thr-318 is a binding site for 4-imidazolone-5-propanoate.

The protein belongs to the metallo-dependent hydrolases superfamily. HutI family. The cofactor is Zn(2+). Requires Fe(3+) as cofactor.

Its subcellular location is the cytoplasm. The enzyme catalyses 4-imidazolone-5-propanoate + H2O = N-formimidoyl-L-glutamate. The protein operates within amino-acid degradation; L-histidine degradation into L-glutamate; N-formimidoyl-L-glutamate from L-histidine: step 3/3. Functionally, catalyzes the hydrolytic cleavage of the carbon-nitrogen bond in imidazolone-5-propanoate to yield N-formimidoyl-L-glutamate. It is the third step in the universal histidine degradation pathway. The protein is Imidazolonepropionase of Burkholderia pseudomallei (strain 1710b).